The following is a 223-amino-acid chain: Phosphoribosylformylglycinamidine synthase subunit PurQ (223 aa).

The Glutamine amidotransferase type-1 domain occupies 4–223; that stretch reads RIGVITFPGT…FQSVLSTLVS (220 aa). C87 serves as the catalytic Nucleophile. Active-site residues include H195 and E197.

Part of the FGAM synthase complex composed of 1 PurL, 1 PurQ and 2 PurS subunits.

The protein resides in the cytoplasm. It carries out the reaction N(2)-formyl-N(1)-(5-phospho-beta-D-ribosyl)glycinamide + L-glutamine + ATP + H2O = 2-formamido-N(1)-(5-O-phospho-beta-D-ribosyl)acetamidine + L-glutamate + ADP + phosphate + H(+). It catalyses the reaction L-glutamine + H2O = L-glutamate + NH4(+). The protein operates within purine metabolism; IMP biosynthesis via de novo pathway; 5-amino-1-(5-phospho-D-ribosyl)imidazole from N(2)-formyl-N(1)-(5-phospho-D-ribosyl)glycinamide: step 1/2. In terms of biological role, part of the phosphoribosylformylglycinamidine synthase complex involved in the purines biosynthetic pathway. Catalyzes the ATP-dependent conversion of formylglycinamide ribonucleotide (FGAR) and glutamine to yield formylglycinamidine ribonucleotide (FGAM) and glutamate. The FGAM synthase complex is composed of three subunits. PurQ produces an ammonia molecule by converting glutamine to glutamate. PurL transfers the ammonia molecule to FGAR to form FGAM in an ATP-dependent manner. PurS interacts with PurQ and PurL and is thought to assist in the transfer of the ammonia molecule from PurQ to PurL. In Corynebacterium jeikeium (strain K411), this protein is Phosphoribosylformylglycinamidine synthase subunit PurQ.